We begin with the raw amino-acid sequence, 306 residues long: Methionyl-tRNA formyltransferase (306 aa).

Residue 109-112 coordinates (6S)-5,6,7,8-tetrahydrofolate; the sequence is SILP.

Belongs to the Fmt family.

It catalyses the reaction L-methionyl-tRNA(fMet) + (6R)-10-formyltetrahydrofolate = N-formyl-L-methionyl-tRNA(fMet) + (6S)-5,6,7,8-tetrahydrofolate + H(+). Functionally, attaches a formyl group to the free amino group of methionyl-tRNA(fMet). The formyl group appears to play a dual role in the initiator identity of N-formylmethionyl-tRNA by promoting its recognition by IF2 and preventing the misappropriation of this tRNA by the elongation apparatus. In Herpetosiphon aurantiacus (strain ATCC 23779 / DSM 785 / 114-95), this protein is Methionyl-tRNA formyltransferase.